The following is a 265-amino-acid chain: Small ribosomal subunit protein uS2 (265 aa).

The interval 231-265 (VEEEYEDYEGAEDDYEYDETEYTDSVIPDDEEEAE) is disordered.

Belongs to the universal ribosomal protein uS2 family.

The chain is Small ribosomal subunit protein uS2 from Trichormus variabilis (strain ATCC 29413 / PCC 7937) (Anabaena variabilis).